A 1849-amino-acid polypeptide reads, in one-letter code: Protein virilizer (1849 aa).

Composition is skewed to basic and acidic residues over residues 206–219 (QHYHQHVDEEQREM), 242–265 (THSESNEREYIRCSRDKGSRDWSR), 281–291 (RSRSDADEHKW), 332–347 (HSSESLHRDRDDEERS), and 785–818 (VEAKPEGKEDKPMDDSVEQKPDEGKAAGIRAAEE). Disordered regions lie at residues 206-364 (QHYH…DEII), 783-818 (RVVEAKPEGKEDKPMDDSVEQKPDEGKAAGIRAAEE), 1557-1584 (SASMETPAVETENDGANPAASCSTSSSG), 1666-1686 (GESKRTLNLSGSPQSNREMTP), 1715-1782 (RGRG…NRGS), and 1798-1849 (IGSP…PYLR). Positions 1671–1684 (TLNLSGSPQSNREM) are enriched in polar residues. Positions 1732–1742 (SRPPNTSRPPS) are enriched in low complexity. Polar residues predominate over residues 1800–1818 (SPSSWTESGGGSYRSTSES).

It belongs to the vir family. As to quaternary structure, component of the WMM complex, a N6-methyltransferase complex composed of a catalytic subcomplex, named MAC, and of an associated subcomplex, named MACOM. The MAC subcomplex is composed of Ime4/Mettl3 and Mettl14. The MACOM subcomplex is composed of fl(2)d, Flacc/Xio, Hakai, vir, and, in some cases of nito. Part of a complex containing fl(2)d, Sxl and vir.

The protein resides in the nucleus. Its function is as follows. Associated component of the WMM complex, a complex that mediates N6-methyladenosine (m6A) methylation of mRNAs, a modification that plays a role in the efficiency of mRNA splicing and is required for sex determination. Required for sex determination and dosage compensation via Sxl alternative splicing: m6A methylation acts as a key regulator of Sxl pre-mRNA and promotes female-specific alternative splicing of Sxl, which determines female physiognomy. M6A methylation is also required for neuronal functions. Required for proper inclusion of regulated exons in Ubx transcripts, leading to isoforms Ia/b and IIa/b. In Drosophila pseudoobscura pseudoobscura (Fruit fly), this protein is Protein virilizer (vir).